The following is a 72-amino-acid chain: Aurein-2.3 (72 aa).

A signal peptide spans 1 to 22 (MAFLKKSLFLVLFLGLVSLSIC). Positions 23-49 (EKEKRQNGEDEDENEAANHEEGSEEKR) are excised as a propeptide. Positions 27–47 (RQNGEDEDENEAANHEEGSEE) are disordered. Residues 38–47 (AANHEEGSEE) show a composition bias toward basic and acidic residues. Position 65 is a leucine amide (L65). The propeptide occupies 69–72 (NDVE).

Post-translationally, amidation is essential for antibacterial activity against Gram-positive bacteria. Expressed by the skin dorsal glands.

It is found in the secreted. It localises to the target cell membrane. Its function is as follows. Amphipathic alpha-helical antimicrobial peptide with weak to moderate activity against Gram-positive bacteria, and no activity against Gram-negative bacteria. Probably acts by disturbing membrane functions with its amphipathic structure. Strongly inhibits the formation of NO by neuronal nitric oxide synthase (nNOS) at micromolar concentrations. Acts by a non-competitive mechanism, probably by binding to calcium/calmodulin and as a consequence blocking calmodulin attachment to nNOS. The protein is Aurein-2.3 of Ranoidea aurea (Green and golden bell frog).